Reading from the N-terminus, the 128-residue chain is Flagellar assembly factor FliW 1 (128 aa).

Belongs to the FliW family. In terms of assembly, interacts with translational regulator CsrA and flagellin(s).

The protein localises to the cytoplasm. In terms of biological role, acts as an anti-CsrA protein, binds CsrA and prevents it from repressing translation of its target genes, one of which is flagellin. Binds to flagellin and participates in the assembly of the flagellum. The chain is Flagellar assembly factor FliW 1 from Wolinella succinogenes (strain ATCC 29543 / DSM 1740 / CCUG 13145 / JCM 31913 / LMG 7466 / NCTC 11488 / FDC 602W) (Vibrio succinogenes).